The primary structure comprises 725 residues: MSLKMKGKKYTDLDFVPTISDSEEDVPDLDSDEEKPKPETKGKKKNKSVDEESADMNSGFRFNTDDGEINTNFDGWEFLGDEKDEEKKDVDLDKIIRKKGGLIGMAHVDEAEKSESEESESDDEDLAMDGFGMGAQEQPEGEEEDEDASNSEQESNDEEEDDDEETYDVGDAGDAEEKVEEDTAEEMQAFYAPESESENAKKEVHKTFNDLALSRPVMKGLSNLGYVKPSPIQSATIPIALLGKDIIAGAVTGSGKTAAFMIPIIERLLYKPAKVASTRVIVLTPTRELAIQVADVGKKIGQFVSNLTFGLAVGGLNLRQQEQMLKTRPDIVIATPGRFIDHIRNSASFNVDSVEVLVIDEADRMLEDGFQDELNEIMSLLPSKRQTLLFSATMNSRIKQLISLSLKRPVRIMIDPPKQAATKLTQEFVRIRKRDHLKPSLLFNLIRKLDPNGQKRIVVFVARKDMAHKLRIILGLLGMAVAELHGSLTQEQRLDSVNKFKSLQVPVLICTDLASRGLDIPKIEVVINYDMPKSYEIYLHRVGRTARAGREGRSITFVGEASAERSIVKDAIRGVNDSEIPGSKAVGRNVDWNQVEETNKIVENMDQTVQDILVEEKEEKEILRAEMELKKGENLLKHKDEIQSRPKRTWFQSEKEKKNSKIMGALSKTKKEVNSKKRKRNEAMEDGHKRSYKKTQSDRTADQERTMKKQAKANGKKKGKSKGKR.

Residues 14 to 184 form a disordered region; it reads DFVPTISDSE…AEEKVEEDTA (171 aa). Acidic residues predominate over residues 21–33; it reads DSEEDVPDLDSDE. 2 stretches are compositionally biased toward basic and acidic residues: residues 85-95 and 107-116; these read EEKKDVDLDKI and HVDEAEKSES. Composition is skewed to acidic residues over residues 117 to 127 and 139 to 184; these read EESESDDEDLA and PEGE…EDTA. The short motif at 206-234 is the Q motif element; the sequence is KTFNDLALSRPVMKGLSNLGYVKPSPIQS. The region spanning 237 to 412 is the Helicase ATP-binding domain; sequence IPIALLGKDI…SLSLKRPVRI (176 aa). An ATP-binding site is contributed by 250–257; sequence AVTGSGKT. Positions 360–363 match the DEAD box motif; that stretch reads DEAD. The region spanning 423–613 is the Helicase C-terminal domain; the sequence is KLTQEFVRIR…NMDQTVQDIL (191 aa). Residues 607 to 686 are a coiled coil; that stretch reads QTVQDILVEE…KRKRNEAMED (80 aa). The interval 646–725 is disordered; the sequence is PKRTWFQSEK…KKKGKSKGKR (80 aa). Residues 669 to 707 are compositionally biased toward basic and acidic residues; the sequence is TKKEVNSKKRKRNEAMEDGHKRSYKKTQSDRTADQERTM. The span at 708–725 shows a compositional bias: basic residues; sequence KKQAKANGKKKGKSKGKR.

This sequence belongs to the DEAD box helicase family. DDX27/DRS1 subfamily. As to quaternary structure, associates with pre-ribosomal particles.

The protein localises to the nucleus. The protein resides in the nucleolus. It carries out the reaction ATP + H2O = ADP + phosphate + H(+). In terms of biological role, ATP-binding RNA helicase involved in ribosome assembly. In Candida glabrata (strain ATCC 2001 / BCRC 20586 / JCM 3761 / NBRC 0622 / NRRL Y-65 / CBS 138) (Yeast), this protein is ATP-dependent RNA helicase DRS1 (DRS1).